A 318-amino-acid chain; its full sequence is MASVQRKSWCALTIRLLGRTEIRRLAKELEFRPRKSLGQNFVHDANTVRRVVSTSGVSRSDHVLEVGPGLGPLTLALLDRGAHVTAVEIDPVLAERLPHTVAEHSHSEIQRLTVLNRDVLTLRRDELAEPPTAVVANLPYNVAVPALLHLLAEFPSIRTVTVMVQAEVAERLAAEPGGKEYGVPSVKVRFFGRVRRCGMVSPTVFWPIPRVYSGLVRIDRYPTSPWPTDPAFRRQVFELVDIAFGQRRKTCRNAFVDWAGSGNESADRLLAASIDPARRGETLSIDDFVRLLQRSADRGGTDREGTSPPTAGQGAPAR.

The S-adenosyl-L-methionine site is built by Asn40, Val42, Gly67, Glu88, Asp118, and Asn137. The segment covering 295 to 305 (SADRGGTDREG) has biased composition (basic and acidic residues). The segment at 295-318 (SADRGGTDREGTSPPTAGQGAPAR) is disordered.

Belongs to the class I-like SAM-binding methyltransferase superfamily. rRNA adenine N(6)-methyltransferase family. RsmA subfamily.

The protein resides in the cytoplasm. It carries out the reaction adenosine(1518)/adenosine(1519) in 16S rRNA + 4 S-adenosyl-L-methionine = N(6)-dimethyladenosine(1518)/N(6)-dimethyladenosine(1519) in 16S rRNA + 4 S-adenosyl-L-homocysteine + 4 H(+). Functionally, specifically dimethylates two adjacent adenosines (A1518 and A1519) in the loop of a conserved hairpin near the 3'-end of 16S rRNA in the 30S particle. May play a critical role in biogenesis of 30S subunits. This is Ribosomal RNA small subunit methyltransferase A from Mycolicibacterium paratuberculosis (strain ATCC BAA-968 / K-10) (Mycobacterium paratuberculosis).